A 349-amino-acid chain; its full sequence is Anthranilate phosphoribosyltransferase (349 aa).

Residues G82, G85 to D86, N92 to T95, K110 to G118, and S122 each bind 5-phospho-alpha-D-ribose 1-diphosphate. Residue G82 participates in anthranilate binding. S94 is a binding site for Mg(2+). Position 113 (N113) interacts with anthranilate. R168 serves as a coordination point for anthranilate. Mg(2+) contacts are provided by D227 and E228.

The protein belongs to the anthranilate phosphoribosyltransferase family. Homodimer. Mg(2+) is required as a cofactor.

The catalysed reaction is N-(5-phospho-beta-D-ribosyl)anthranilate + diphosphate = 5-phospho-alpha-D-ribose 1-diphosphate + anthranilate. Its pathway is amino-acid biosynthesis; L-tryptophan biosynthesis; L-tryptophan from chorismate: step 2/5. In terms of biological role, catalyzes the transfer of the phosphoribosyl group of 5-phosphorylribose-1-pyrophosphate (PRPP) to anthranilate to yield N-(5'-phosphoribosyl)-anthranilate (PRA). This Pseudomonas putida (strain ATCC 700007 / DSM 6899 / JCM 31910 / BCRC 17059 / LMG 24140 / F1) protein is Anthranilate phosphoribosyltransferase.